Consider the following 74-residue polypeptide: Small ribosomal subunit protein bS21 (74 aa).

Belongs to the bacterial ribosomal protein bS21 family.

This chain is Small ribosomal subunit protein bS21, found in Coxiella burnetii (strain Dugway 5J108-111).